We begin with the raw amino-acid sequence, 373 residues long: Probable pectin lyase C (373 aa).

A signal peptide spans 1–18 (MKVPFLQLLCLNAALASA). 2 disulfide bridges follow: Cys-81-Cys-100 and Cys-90-Cys-220. N-linked (GlcNAc...) asparagine glycosylation occurs at Asn-123. Arg-250 is a catalytic residue. Cysteines 316 and 324 form a disulfide.

The protein belongs to the polysaccharide lyase 1 family.

The protein resides in the secreted. The enzyme catalyses Eliminative cleavage of (1-&gt;4)-alpha-D-galacturonan methyl ester to give oligosaccharides with 4-deoxy-6-O-methyl-alpha-D-galact-4-enuronosyl groups at their non-reducing ends.. Pectinolytic enzymes consist of four classes of enzymes: pectin lyase, polygalacturonase, pectin methylesterase and rhamnogalacturonase. Among pectinolytic enzymes, pectin lyase is the most important in depolymerization of pectin, since it cleaves internal glycosidic bonds of highly methylated pectins. The chain is Probable pectin lyase C (pelC) from Aspergillus niger (strain ATCC MYA-4892 / CBS 513.88 / FGSC A1513).